Here is a 338-residue protein sequence, read N- to C-terminus: Tryptophan--tRNA ligase (338 aa).

ATP contacts are provided by residues 11–13 (QPS) and 19–20 (GN). The 'HIGH' region signature appears at 12-20 (PSGELSIGN). Asp135 is an L-tryptophan binding site. ATP-binding positions include 147-149 (GSD), Val189, and 198-202 (KMSKS). Positions 198–202 (KMSKS) match the 'KMSKS' region motif.

It belongs to the class-I aminoacyl-tRNA synthetase family. As to quaternary structure, homodimer.

The protein localises to the cytoplasm. It catalyses the reaction tRNA(Trp) + L-tryptophan + ATP = L-tryptophyl-tRNA(Trp) + AMP + diphosphate + H(+). Catalyzes the attachment of tryptophan to tRNA(Trp). This Aliivibrio fischeri (strain ATCC 700601 / ES114) (Vibrio fischeri) protein is Tryptophan--tRNA ligase.